The following is a 111-amino-acid chain: Small ribosomal subunit protein uS10 (111 aa).

The protein belongs to the universal ribosomal protein uS10 family. In terms of assembly, part of the 30S ribosomal subunit.

Its function is as follows. Involved in the binding of tRNA to the ribosomes. The chain is Small ribosomal subunit protein uS10 from Protochlamydia amoebophila (strain UWE25).